We begin with the raw amino-acid sequence, 456 residues long: Phosphomannomutase (456 aa).

Serine 98 acts as the Phosphoserine intermediate in catalysis. 4 residues coordinate Mg(2+): serine 98, aspartate 245, aspartate 247, and aspartate 249.

The protein belongs to the phosphohexose mutase family. It depends on Mg(2+) as a cofactor.

It carries out the reaction alpha-D-mannose 1-phosphate = D-mannose 6-phosphate. It participates in nucleotide-sugar biosynthesis; GDP-alpha-D-mannose biosynthesis; alpha-D-mannose 1-phosphate from D-fructose 6-phosphate: step 2/2. In terms of biological role, involved in the biosynthesis of the capsular polysaccharide colanic acid. In Escherichia coli (strain K12), this protein is Phosphomannomutase (manB).